The sequence spans 583 residues: Sensor protein SrrB (583 aa).

Residues 1–11 (MMSRLNSVVIK) lie on the Cytoplasmic side of the membrane. A helical transmembrane segment spans residues 12 to 32 (LWLTIILIVTTVLILLSIALI). At 33 to 174 (TFMQYYFTQE…SIEDTNNAIT (142 aa)) the chain is on the extracellular side. Residues 175–195 (IITIITAVIFLTITTVFAFFL) traverse the membrane as a helical segment. Over 196-583 (SSRITKPLRR…TFIIKLPKPE (388 aa)) the chain is Cytoplasmic. Positions 197 to 249 (SRITKPLRRLRDQATRVSEGDYSYKPSVTTKDEIGQLSQAFNQMSTEIEEHVD) constitute an HAMP domain. One can recognise a Histidine kinase domain in the interval 366–583 (NVSHELRTPI…TFIIKLPKPE (218 aa)). Position 369 is a phosphohistidine; by autocatalysis (histidine 369).

It is found in the cell membrane. It carries out the reaction ATP + protein L-histidine = ADP + protein N-phospho-L-histidine.. Member of the two-component regulatory system SrrA/SrrB, which is involved in the global regulation of staphylococcal virulence factors in response to environmental oxygen levels as well as biofilm formation. Also plays an essential role in host-derived nitric oxide resistance by regulating hmp/flavohemoglobin, an enzyme that detoxifies nitric oxide by converting it to nitrate. Functions as a sensor protein kinase which is autophosphorylated at a histidine residue and transfers its phosphate group to SrrA. In turn, SrrA binds to the upstream promoter regions of the target genes to positively and negatively regulate their expression. This is Sensor protein SrrB (srrB) from Staphylococcus aureus.